Consider the following 492-residue polypeptide: Heat shock factor protein 4 (492 aa).

A DNA-binding region spans residues 17 to 121 (VPAFLGKLWA…QLLERVRRKV (105 aa)). The interval 129–203 (GRWRPEDLGR…GPLQAGPSNA (75 aa)) is hydrophobic repeat HR-A/B. The interval 245-322 (LPETNLGLSP…ECDFCVTAPP (78 aa)) is interactions with DUSP26, MAPK1 and MAPK2. A disordered region spans residues 246–285 (PETNLGLSPHRARGPIISDIPEDSPSPEGTRLSPSSDGRR). A Glycyl lysine isopeptide (Lys-Gly) (interchain with G-Cter in SUMO) cross-link involves residue Lys293. Ser298 is subject to Phosphoserine. The tract at residues 337–400 (GSFSPEGPRN…PAGPLDVLGP (64 aa)) is disordered. A hydrophobic repeat HR-C region spans residues 364–389 (LGLESGDRSPESLLPPMLLQPPQESV). Positions 374-388 (ESLLPPMLLQPPQES) are enriched in low complexity.

This sequence belongs to the HSF family. In terms of assembly, homotrimer. Exhibits constitutive DNA binding and forms trimers even in the absence of stress. Interacts with ALKBH4, DUSP26, MAPK1, MAPK2, MAPK8 and MAP kinase p38. In terms of processing, phosphorylated mainly on serine residues. Phosphorylation on Ser-298 promotes sumoylation on Lys-293. Isoform HSF4B is constitutively sumoylated. Sumoylation represses the transcriptional activity and is promoted by phosphorylation on Ser-298. HSFA is not sumoylated. In terms of tissue distribution, expressed in heart, skeletal muscle, eye and brain, and at much lower levels in some other tissues.

It is found in the nucleus. Functionally, heat-shock transcription factor that specifically binds heat shock promoter elements (HSE). Required for denucleation and organelle rupture and degradation that occur during eye lens terminal differentiation, when fiber cells that compose the lens degrade all membrane-bound organelles in order to provide lens with transparency to allow the passage of light. In this process, may regulate denucleation of lens fiber cells in part by activating DNASE2B transcription. May be involved in DNA repair through the transcriptional regulation of RAD51. May up-regulate p53/TP53 protein in eye lens fiber cells, possibly through protein stabilization. In the eye lens, controls the expression of alpha-crystallin B chain/CRYAB and consequently may be involved in the regulation of lysosomal acidification. Transcriptional repressor. Its function is as follows. Transcriptional activator. The chain is Heat shock factor protein 4 (HSF4) from Homo sapiens (Human).